The sequence spans 417 residues: Mast cell carboxypeptidase A (417 aa).

The signal sequence occupies residues 1–15; the sequence is MRLILPVGLIATTLA. Positions 16–109 are cleaved as a propeptide — activation peptide; it reads IAPVRFDREK…IEKQFDVKED (94 aa). One can recognise a Peptidase M14 domain in the interval 118–412; the sequence is KYNNWEKIVA…LAVKFIAKYI (295 aa). Cystine bridges form between Cys173–Cys186 and Cys245–Cys268. Zn(2+) contacts are provided by His176 and Glu179. Residue His304 participates in Zn(2+) binding. The active-site Proton donor/acceptor is the Glu378.

Belongs to the peptidase M14 family. The cofactor is Zn(2+).

It localises to the cytoplasmic vesicle. It is found in the secretory vesicle. It catalyses the reaction Release of a C-terminal amino acid, but little or no action with -Asp, -Glu, -Arg, -Lys or -Pro.. The polypeptide is Mast cell carboxypeptidase A (CPA3) (Homo sapiens (Human)).